The chain runs to 445 residues: MKPVIALVGRPNVGKSTLFNRLTRSRDALVADLPGLTRDRHYGEGRVGERPYLVVDTGGFEPVAKDGILHQMARQTRQAVEEADVVVFIVDGRNGLAPQDKSIADYLRKTGRPIFLVVNKAEGMKYTAVATDFYELGLGDPRAISAAHGDGVTDMINEALEVAYAGQPEEADDDDPSRGIKIAIVGRPNVGKSTLVNALIGEDRVIAFDMPGTTRDSIYVDFERNGKKYTLIDTAGLRRRGKVFEAIEKFSVVKTLQSISDANVVILLLDAQQDISDQDAHIAGFVVEQGRALVIGVNKWDGLDDHARDRAKADLTRKLKFLDFAKSHYISAAKKTGIGALMRSVDDAYAAAMAKLPTPKLTRALIEAVEFQQPRRRGPVRPKLRYAHQGGQNPPLIVIHGNALDAVTDTYKRYLENRFRETFSLTGTPLRIEFRSSNNPYADKG.

2 consecutive EngA-type G domains span residues 3–167 (PVIA…YAGQ) and 180–353 (IKIA…AAAM). GTP-binding positions include 9–16 (GRPNVGKS), 56–60 (DTGGF), 119–122 (NKAE), 186–193 (GRPNVGKS), 233–237 (DTAGL), and 298–301 (NKWD). The 85-residue stretch at 354-438 (AKLPTPKLTR…PLRIEFRSSN (85 aa)) folds into the KH-like domain.

Belongs to the TRAFAC class TrmE-Era-EngA-EngB-Septin-like GTPase superfamily. EngA (Der) GTPase family. Associates with the 50S ribosomal subunit.

Functionally, GTPase that plays an essential role in the late steps of ribosome biogenesis. In Burkholderia ambifaria (strain MC40-6), this protein is GTPase Der.